Here is a 3919-residue protein sequence, read N- to C-terminus: Intermembrane lipid transfer protein Vps13D (3919 aa).

Residues 4–114 form the Chorein N-terminal domain; it reads DLITWVLNTY…QDLEYKLAVL (111 aa). The interval 706 to 736 is disordered; it reads TSDDDETYLTPCSTPPASEKSGSESPTLLEN. The 43-residue stretch at 2292-2334 folds into the UBA domain; the sequence is KADSDLEKAAPLVAMGFEISDCLYAMQINNWRINDAAIWLSQQ. The 277-residue stretch at 2837-3113 folds into the SHR-BD domain; the sequence is ELYISAPVWI…YVMDDPLGQQ (277 aa). The segment at 3749–3768 is disordered; the sequence is VRETSRDSHRNAPERKRLPR. A compositionally biased stretch (basic and acidic residues) spans 3751 to 3764; sequence ETSRDSHRNAPERK.

Belongs to the VPS13 family. In terms of tissue distribution, expressed in intestinal cells (at protein level).

The protein localises to the cytoplasm. Its subcellular location is the lysosome. Mediates the transfer of lipids between membranes at organelle contact sites. Functions in promoting mitochondrial clearance by mitochondrial autophagy (mitophagy), also possibly by positively regulating mitochondrial fission. Mitophagy plays an important role in regulating cell health and mitochondrial size and homeostasis. In Drosophila melanogaster (Fruit fly), this protein is Intermembrane lipid transfer protein Vps13D.